The following is a 331-amino-acid chain: GTP 3',8-cyclase 2 (331 aa).

A Radical SAM core domain is found at 9-234 (PFGRRITYLR…PSLARSGGPS (226 aa)). Position 18 (arginine 18) interacts with GTP. The [4Fe-4S] cluster site is built by cysteine 25 and cysteine 29. Tyrosine 31 contributes to the S-adenosyl-L-methionine binding site. Residue cysteine 32 participates in [4Fe-4S] cluster binding. Residue arginine 67 participates in GTP binding. Glycine 71 lines the S-adenosyl-L-methionine pocket. Residue threonine 98 coordinates GTP. Serine 122 is a binding site for S-adenosyl-L-methionine. Lysine 159 contributes to the GTP binding site. Methionine 193 lines the S-adenosyl-L-methionine pocket. Cysteine 257 and cysteine 260 together coordinate [4Fe-4S] cluster. 262 to 264 (RVR) is a GTP binding site. [4Fe-4S] cluster is bound at residue cysteine 274.

Belongs to the radical SAM superfamily. MoaA family. As to quaternary structure, monomer and homodimer. Requires [4Fe-4S] cluster as cofactor.

The catalysed reaction is GTP + AH2 + S-adenosyl-L-methionine = (8S)-3',8-cyclo-7,8-dihydroguanosine 5'-triphosphate + 5'-deoxyadenosine + L-methionine + A + H(+). Its pathway is cofactor biosynthesis; molybdopterin biosynthesis. Functionally, catalyzes the cyclization of GTP to (8S)-3',8-cyclo-7,8-dihydroguanosine 5'-triphosphate. In Pseudomonas aeruginosa (strain ATCC 15692 / DSM 22644 / CIP 104116 / JCM 14847 / LMG 12228 / 1C / PRS 101 / PAO1), this protein is GTP 3',8-cyclase 2 (moaA2).